Here is a 334-residue protein sequence, read N- to C-terminus: N-acetyl-gamma-glutamyl-phosphate reductase (334 aa).

The active site involves C154.

The protein belongs to the NAGSA dehydrogenase family. Type 1 subfamily.

Its subcellular location is the cytoplasm. The catalysed reaction is N-acetyl-L-glutamate 5-semialdehyde + phosphate + NADP(+) = N-acetyl-L-glutamyl 5-phosphate + NADPH + H(+). It participates in amino-acid biosynthesis; L-arginine biosynthesis; N(2)-acetyl-L-ornithine from L-glutamate: step 3/4. Functionally, catalyzes the NADPH-dependent reduction of N-acetyl-5-glutamyl phosphate to yield N-acetyl-L-glutamate 5-semialdehyde. The sequence is that of N-acetyl-gamma-glutamyl-phosphate reductase from Escherichia coli O157:H7.